Consider the following 578-residue polypeptide: Probable arginine--tRNA ligase, mitochondrial (578 aa).

A mitochondrion-targeting transit peptide spans 1–16 (MACGFRRSIASQLSRV). Residues 133–135 (SPN), His-144, Tyr-322, Asp-326, and Gln-350 contribute to the L-arginine site. A 'HIGH' region motif is present at residues 133-144 (SPNVAKKFHVGH). The residue at position 568 (Lys-568) is an N6-acetyllysine.

This sequence belongs to the class-I aminoacyl-tRNA synthetase family.

Its subcellular location is the mitochondrion membrane. It carries out the reaction tRNA(Arg) + L-arginine + ATP = L-arginyl-tRNA(Arg) + AMP + diphosphate. Its function is as follows. Catalyzes the attachment of arginine to tRNA(Arg) in a two-step reaction: arginine is first activated by ATP to form Arg-AMP and then transferred to the acceptor end of tRNA(Arg). The protein is Probable arginine--tRNA ligase, mitochondrial (RARS2) of Bos taurus (Bovine).